The primary structure comprises 745 residues: Elongation factor G, mitochondrial (745 aa).

The tr-type G domain maps to 40–317; sequence ERIRNIGISA…AVLDYLPNPG (278 aa). GTP contacts are provided by residues 49-56, 116-120, and 170-173; these read AHIDSGKT, DTPGH, and NKLD.

Belongs to the TRAFAC class translation factor GTPase superfamily. Classic translation factor GTPase family. EF-G/EF-2 subfamily.

The protein localises to the mitochondrion. Its pathway is protein biosynthesis; polypeptide chain elongation. In terms of biological role, mitochondrial GTPase that catalyzes the GTP-dependent ribosomal translocation step during translation elongation. During this step, the ribosome changes from the pre-translocational (PRE) to the post-translocational (POST) state as the newly formed A-site-bound peptidyl-tRNA and P-site-bound deacylated tRNA move to the P and E sites, respectively. Catalyzes the coordinated movement of the two tRNA molecules, the mRNA and conformational changes in the ribosome. Essential during development as it acts as a retrograde signal from mitochondria to the nucleus to slow down cell proliferation if mitochondrial energy output is low. The chain is Elongation factor G, mitochondrial from Drosophila yakuba (Fruit fly).